Reading from the N-terminus, the 349-residue chain is N-acetyl-gamma-glutamyl-phosphate reductase (349 aa).

Cys149 is a catalytic residue.

This sequence belongs to the NAGSA dehydrogenase family. Type 1 subfamily.

The protein localises to the cytoplasm. It carries out the reaction N-acetyl-L-glutamate 5-semialdehyde + phosphate + NADP(+) = N-acetyl-L-glutamyl 5-phosphate + NADPH + H(+). The protein operates within amino-acid biosynthesis; L-arginine biosynthesis; N(2)-acetyl-L-ornithine from L-glutamate: step 3/4. Its function is as follows. Catalyzes the NADPH-dependent reduction of N-acetyl-5-glutamyl phosphate to yield N-acetyl-L-glutamate 5-semialdehyde. In Acinetobacter baumannii (strain SDF), this protein is N-acetyl-gamma-glutamyl-phosphate reductase.